The primary structure comprises 339 residues: 4-hydroxy-2-oxovalerate aldolase (339 aa).

The Pyruvate carboxyltransferase domain occupies 8 to 260 (IILHDMCLRD…STDVDVFKLM (253 aa)). Residue 16 to 17 (RD) participates in substrate binding. D17 contacts Mn(2+). Residue H20 is the Proton acceptor of the active site. Substrate-binding residues include S170 and H199. Mn(2+)-binding residues include H199 and H201. Y290 lines the substrate pocket.

It belongs to the 4-hydroxy-2-oxovalerate aldolase family.

It catalyses the reaction (S)-4-hydroxy-2-oxopentanoate = acetaldehyde + pyruvate. The sequence is that of 4-hydroxy-2-oxovalerate aldolase from Shewanella woodyi (strain ATCC 51908 / MS32).